Here is a 401-residue protein sequence, read N- to C-terminus: Argininosuccinate synthase (401 aa).

ATP contacts are provided by residues 10–18 and A38; that span reads AYSGGVDTS. L-citrulline is bound at residue Y89. G119 serves as a coordination point for ATP. L-aspartate-binding residues include T121, N125, and D126. Position 125 (N125) interacts with L-citrulline. Positions 129, 177, 186, 262, and 274 each coordinate L-citrulline.

The protein belongs to the argininosuccinate synthase family. Type 1 subfamily. Homotetramer.

The protein resides in the cytoplasm. It catalyses the reaction L-citrulline + L-aspartate + ATP = 2-(N(omega)-L-arginino)succinate + AMP + diphosphate + H(+). The protein operates within amino-acid biosynthesis; L-arginine biosynthesis; L-arginine from L-ornithine and carbamoyl phosphate: step 2/3. This chain is Argininosuccinate synthase, found in Prochlorococcus marinus (strain MIT 9303).